A 563-amino-acid chain; its full sequence is Arginine--tRNA ligase (563 aa).

The 'HIGH' region signature appears at 137-147 (ANPTGLLHMGN).

Belongs to the class-I aminoacyl-tRNA synthetase family. As to quaternary structure, monomer.

The protein resides in the cytoplasm. The enzyme catalyses tRNA(Arg) + L-arginine + ATP = L-arginyl-tRNA(Arg) + AMP + diphosphate. In Desulforudis audaxviator (strain MP104C), this protein is Arginine--tRNA ligase.